The chain runs to 623 residues: Heterogeneous nuclear ribonucleoprotein Q (623 aa).

Position 2 is an N-acetylalanine (Ala-2). Ser-159 carries the phosphoserine modification. RRM domains follow at residues 162-241 (TEIF…ISVA), 243-325 (NRLF…WADP), and 338-408 (KVLF…FAKP). Residue Lys-168 forms a Glycyl lysine isopeptide (Lys-Gly) (interchain with G-Cter in SUMO2) linkage. An N6-acetyllysine modification is found at Lys-221. Lys-363 bears the N6-acetyllysine mark. Residue Tyr-373 is modified to Phosphotyrosine. The interval 400 to 561 (NIEIVFAKPP…GARGGRGGNV (162 aa)) is interaction with APOBEC1. Arg-444 carries the post-translational modification Asymmetric dimethylarginine; by PRMT1; alternate. An Omega-N-methylarginine; by PRMT1; alternate modification is found at Arg-444. Repeat copies occupy residues 448-450 (RGG), 451-453 (RGG), 460-464 (YYGYE), 469-472 (YYGY), 478-480 (RGG), and 485-488 (YYGY). An 8 X 3 AA repeats of R-G-G region spans residues 448-559 (RGGRGGYGYP…VRGARGGRGG (112 aa)). A 3 X 4 AA repeats of Y-Y-G-Y region spans residues 460-488 (YYGYEDYYDYYGYDYHNYRGGYEDPYYGY). Arg-496 carries the post-translational modification Omega-N-methylarginine; by PRMT1. Residues 497–623 (GRGGRGARGA…YQDTFGQQWK (127 aa)) form a disordered region. A 1-4 repeat occupies 498 to 500 (RGG). Residues 504-522 (RGAAPSRGRGAAPPRGRAG) show a composition bias toward low complexity. At Arg-510 the chain carries Asymmetric dimethylarginine; by PRMT1. The residue at position 518 (Arg-518) is an Asymmetric dimethylarginine; by PRMT1; alternate. An Omega-N-methylarginine; by PRMT1; alternate modification is found at Arg-518. The tract at residues 518-549 (RGRAGYSQRGGPGSARGVRGARGGAQQQRGRG) is interaction with SMN. Arg-526 is subject to Asymmetric dimethylarginine; alternate. Arg-526 bears the Omega-N-methylarginine; alternate mark. The stretch at 526 to 528 (RGG) is one 1-5 repeat. Asymmetric dimethylarginine; by PRMT1; alternate occurs at positions 536 and 539. Residues Arg-536 and Arg-539 each carry the omega-N-methylarginine; by PRMT1; alternate modification. 3 tandem repeats follow at residues 539–541 (RGG), 554–556 (RGG), and 557–559 (RGG). Over residues 550-562 (VRGARGGRGGNVG) the composition is skewed to gly residues. A Bipartite nuclear localization signal motif is present at residues 564–578 (KRKADGYNQPDTKRR). Residues 580-595 (TNNQNWGSQPIAQQPL) show a composition bias toward polar residues. A Phosphoserine modification is found at Ser-587. Residue Lys-607 forms a Glycyl lysine isopeptide (Lys-Gly) (interchain with G-Cter in SUMO2) linkage. The segment covering 611 to 623 (QEFYQDTFGQQWK) has biased composition (polar residues).

Identified in the spliceosome C complex. Component of the coding region determinant (CRD)-mediated complex, composed of DHX9, HNRNPU, IGF2BP1, SYNCRIP and YBX1. Identified in a mRNP complex, at least composed of DHX9, DDX3X, ELAVL1, HNRNPU, IGF2BP1, ILF3, PABPC1, PCBP2, PTBP2, STAU1, STAU2, SYNCRIP and YBX1. Identified in a mRNP granule complex, at least composed of ACTB, ACTN4, DHX9, ERG, HNRNPA1, HNRNPA2B1, HNRNPAB, HNRNPD, HNRNPL, HNRNPR, HNRNPU, HSPA1, HSPA8, IGF2BP1, ILF2, ILF3, NCBP1, NCL, PABPC1, PABPC4, PABPN1, RPLP0, RPS3, RPS3A, RPS4X, RPS8, RPS9, SYNCRIP, YBX1 and untranslated mRNAs. Interacts with GTPBP1. Isoform 1 is a component of the APOB mRNA editosome complex. Isoform 1 interacts with APOBEC1 and A1CF. Part of a complex associated with the FOS mCRD domain and consisting of PABPC1, PAIP1, CSDE1/UNR, HNRPD and SYNCRIP. Isoform 2 interacts with HNRPR. Interacts with POLR2A hyperphosphorylated C-terminal domain. Interacts with HABP4. Identified in a histone pre-mRNA complex, at least composed of ERI1, LSM11, SLBP, SNRPB, SYNCRIP and YBX1. Isoform 1 and isoform 2 interact with SMN. Isoform 2 interacts through its C-terminal domain with SYT7, SYT8 and SYT9. The non-phosphorylated and phosphorylated forms are colocalized with PAIP1 in polysomes. Post-translationally, phosphorylated on tyrosine. The membrane-bound form found in microsomes is phosphorylated in vitro by insulin receptor tyrosine kinase (INSR). Phosphorylation is inhibited upon binding to RNA, whereas the cytoplasmic form is poorly phosphorylated. Ubiquitous. Detected in heart, brain, spleen, lung, liver, skeletal muscle, adipocytes, kidney and testis.

The protein localises to the nucleus. It localises to the nucleoplasm. Its subcellular location is the microsome. It is found in the cytoplasm. Functionally, heterogeneous nuclear ribonucleoprotein (hnRNP) implicated in mRNA processing mechanisms. Component of the CRD-mediated complex that promotes MYC mRNA stability. Isoform 1 and isoform 2 are associated in vitro with pre-mRNA, splicing intermediates and mature mRNA protein complexes. Isoform 1 binds to apoB mRNA AU-rich sequences. Isoform 1 is part of the APOB mRNA editosome complex and may modulate the postranscriptional C to U RNA-editing of the APOB mRNA through either by binding to A1CF (APOBEC1 complementation factor), to APOBEC1 or to RNA itself. May be involved in translationally coupled mRNA turnover. Implicated with other RNA-binding proteins in the cytoplasmic deadenylation/translational and decay interplay of the FOS mRNA mediated by the major coding-region determinant of instability (mCRD) domain. Interacts in vitro preferentially with poly(A) and poly(U) RNA sequences. Isoform 2 may be involved in cytoplasmic vesicle-based mRNA transport through interaction with synaptotagmins. The chain is Heterogeneous nuclear ribonucleoprotein Q (Syncrip) from Mus musculus (Mouse).